The primary structure comprises 245 residues: Small ribosomal subunit protein uS2 (245 aa).

This sequence belongs to the universal ribosomal protein uS2 family.

This is Small ribosomal subunit protein uS2 from Pseudomonas fluorescens (strain SBW25).